The chain runs to 453 residues: Bifunctional protein GlmU (453 aa).

Residues 1–225 (MNIVILAAGT…EWETLGVNSK (225 aa)) form a pyrophosphorylase region. Residues 6–9 (LAAG), K20, Q71, 76–77 (GT), 98–100 (YGD), G135, E150, N165, and N223 contribute to the UDP-N-acetyl-alpha-D-glucosamine site. D100 lines the Mg(2+) pocket. N223 contacts Mg(2+). Residues 226–246 (AQLAELERIHQRNVADALLVD) form a linker region. The interval 247–453 (GVTLADPARV…GYVRPVKKKS (207 aa)) is N-acetyltransferase. The UDP-N-acetyl-alpha-D-glucosamine site is built by R329 and K347. H359 serves as the catalytic Proton acceptor. UDP-N-acetyl-alpha-D-glucosamine-binding residues include Y362 and N373. Acetyl-CoA contacts are provided by residues A376, 382–383 (NY), S401, and A419.

In the N-terminal section; belongs to the N-acetylglucosamine-1-phosphate uridyltransferase family. This sequence in the C-terminal section; belongs to the transferase hexapeptide repeat family. In terms of assembly, homotrimer. It depends on Mg(2+) as a cofactor.

The protein localises to the cytoplasm. It catalyses the reaction alpha-D-glucosamine 1-phosphate + acetyl-CoA = N-acetyl-alpha-D-glucosamine 1-phosphate + CoA + H(+). The enzyme catalyses N-acetyl-alpha-D-glucosamine 1-phosphate + UTP + H(+) = UDP-N-acetyl-alpha-D-glucosamine + diphosphate. It participates in nucleotide-sugar biosynthesis; UDP-N-acetyl-alpha-D-glucosamine biosynthesis; N-acetyl-alpha-D-glucosamine 1-phosphate from alpha-D-glucosamine 6-phosphate (route II): step 2/2. The protein operates within nucleotide-sugar biosynthesis; UDP-N-acetyl-alpha-D-glucosamine biosynthesis; UDP-N-acetyl-alpha-D-glucosamine from N-acetyl-alpha-D-glucosamine 1-phosphate: step 1/1. Its pathway is bacterial outer membrane biogenesis; LPS lipid A biosynthesis. Functionally, catalyzes the last two sequential reactions in the de novo biosynthetic pathway for UDP-N-acetylglucosamine (UDP-GlcNAc). The C-terminal domain catalyzes the transfer of acetyl group from acetyl coenzyme A to glucosamine-1-phosphate (GlcN-1-P) to produce N-acetylglucosamine-1-phosphate (GlcNAc-1-P), which is converted into UDP-GlcNAc by the transfer of uridine 5-monophosphate (from uridine 5-triphosphate), a reaction catalyzed by the N-terminal domain. This Burkholderia orbicola (strain MC0-3) protein is Bifunctional protein GlmU.